A 1036-amino-acid chain; its full sequence is Non-canonical non-ribosomal peptide synthetase FUB8 (1036 aa).

The adenylation (A) domain stretch occupies residues glutamate 21–glutamate 343. The region spanning threonine 544–leucine 621 is the Carrier domain. Serine 579 bears the O-(pantetheine 4'-phosphoryl)serine mark. The interval leucine 658 to isoleucine 899 is thioester reductase (TR) domain.

It participates in mycotoxin biosynthesis. Functionally, non-canonical non-ribosomal peptide synthetase; part of the gene cluster that mediates the biosynthesis of fusaric acid, a mycotoxin with low to moderate toxicity to animals and humans, but with high phytotoxic properties. L-aspartate is suggested as fusaric acid amino acid precursor that is activated and further processed to O-acetyl-L-homoserine by cluster enzymes aspartate kinase FUB3 and homoserine O-acetyltransferase FUB5, as well as enzymes of the primary metabolism. The polyketide synthase (PKS) FUB1 generates the triketide trans-2-hexenal which is presumptively released by the hydrolase FUB4 and linked to the NRPS-bound amino acid precursor by NAD(P)-dependent dehydrogenase FUB6. FUB1, FUB4, and the non-canonical NRPS Fub8 may form an enzyme complex. Further processing of the NRPS-bound intermediate might be carried out by FUB6 and the sulfhydrylase FUB7, enabling a spontaneous electrocyclization to close the carbon backbone of fusaric acid. Dihydrofusaric acid is likely to be released via reduction by the thioester reductase (TR) domain of FUB8 whereupon the final oxidation to fusaric acid may (also) be performed by the FMN-dependent dehydrogenase FUB9. The chain is Non-canonical non-ribosomal peptide synthetase FUB8 from Fusarium oxysporum f. sp. lycopersici (strain 4287 / CBS 123668 / FGSC 9935 / NRRL 34936) (Fusarium vascular wilt of tomato).